The primary structure comprises 162 residues: Class I hydrophobin 3 (162 aa).

Disulfide bonds link Cys-36–Cys-150 and Cys-151–Cys-159.

This sequence belongs to the fungal hydrophobin family. As to quaternary structure, self-assembles to form functional amyloid fibrils called rodlets. Self-assembly into fibrillar rodlets occurs spontaneously at hydrophobic:hydrophilic interfaces and the rodlets further associate laterally to form amphipathic monolayers.

The protein resides in the secreted. The protein localises to the cell wall. Functionally, aerial growth, conidiation, and dispersal of filamentous fungi in the environment rely upon a capability of their secreting small amphipathic proteins called hydrophobins (HPBs) with low sequence identity. Class I can self-assemble into an outermost layer of rodlet bundles on aerial cell surfaces, conferring cellular hydrophobicity that supports fungal growth, development and dispersal; whereas Class II form highly ordered films at water-air interfaces through intermolecular interactions but contribute nothing to the rodlet structure. This Coprinopsis cinerea (strain Okayama-7 / 130 / ATCC MYA-4618 / FGSC 9003) (Inky cap fungus) protein is Class I hydrophobin 3.